We begin with the raw amino-acid sequence, 185 residues long: Nucleoside triphosphate pyrophosphatase (185 aa).

Asp-70 acts as the Proton acceptor in catalysis.

It belongs to the Maf family. A divalent metal cation is required as a cofactor.

It is found in the cytoplasm. The catalysed reaction is a ribonucleoside 5'-triphosphate + H2O = a ribonucleoside 5'-phosphate + diphosphate + H(+). It carries out the reaction a 2'-deoxyribonucleoside 5'-triphosphate + H2O = a 2'-deoxyribonucleoside 5'-phosphate + diphosphate + H(+). Its function is as follows. Nucleoside triphosphate pyrophosphatase. May have a dual role in cell division arrest and in preventing the incorporation of modified nucleotides into cellular nucleic acids. The chain is Nucleoside triphosphate pyrophosphatase from Nitratiruptor sp. (strain SB155-2).